Here is a 95-residue protein sequence, read N- to C-terminus: Protein TusB (95 aa).

It belongs to the DsrH/TusB family. Heterohexamer, formed by a dimer of trimers. The hexameric TusBCD complex contains 2 copies each of TusB, TusC and TusD. The TusBCD complex interacts with TusE.

The protein resides in the cytoplasm. Part of a sulfur-relay system required for 2-thiolation of 5-methylaminomethyl-2-thiouridine (mnm(5)s(2)U) at tRNA wobble positions. The chain is Protein TusB from Yersinia pseudotuberculosis serotype O:1b (strain IP 31758).